Reading from the N-terminus, the 600-residue chain is DNA mismatch repair protein MutL (600 aa).

It belongs to the DNA mismatch repair MutL/HexB family.

Functionally, this protein is involved in the repair of mismatches in DNA. It is required for dam-dependent methyl-directed DNA mismatch repair. May act as a 'molecular matchmaker', a protein that promotes the formation of a stable complex between two or more DNA-binding proteins in an ATP-dependent manner without itself being part of a final effector complex. This Sinorhizobium fredii (strain NBRC 101917 / NGR234) protein is DNA mismatch repair protein MutL.